The sequence spans 306 residues: tRNA pseudouridine synthase B (306 aa).

Residue Asp-43 is the Nucleophile of the active site.

This sequence belongs to the pseudouridine synthase TruB family. Type 1 subfamily.

It carries out the reaction uridine(55) in tRNA = pseudouridine(55) in tRNA. Its function is as follows. Responsible for synthesis of pseudouridine from uracil-55 in the psi GC loop of transfer RNAs. The polypeptide is tRNA pseudouridine synthase B (Syntrophobacter fumaroxidans (strain DSM 10017 / MPOB)).